The following is a 390-amino-acid chain: MTTKLFKQTIIPTNKDVDEKYIYFIERADHKTIKPLHPSFESWQFAGNQHAHQLEQGYSEGHRFITNYNATSRLNSAMTLQIMNKPMITIVKKFTTNTPHQVTTIPEGYSFGVVKEKLCTNEQLLSLLSLTAEPTAESDEEVNDVSRDDEAEKKDVEARMDWSEDIIELPKQQQESVLVVSKPNMIAEEELMPADIEVVAPRVLEPPTLSPAPIVVAVSSESPQVKEIERPLTNAPKEQRTSRKSVTRTTKPSFSSLSSPDIVSASVITPVSKAAARPVEEFLSSVFVSLFEAWFVRMLPLIKLGKPVYIMPGTIKWDKEVQITDTKIRYYNSVSGRLILAEMESITRALQPGELEDRKELVRRTLETVCAGNNIYVLTGNDTFGVLEAE.

The segment at 229 to 253 (ERPLTNAPKEQRTSRKSVTRTTKPS) is disordered.

This is Non-structural protein 3 (S7) from Lymantria dispar cypovirus 1 (isolate Rao) (LdCPV-1).